The chain runs to 280 residues: Mevalonyl-coenzyme A hydratase SIDH (280 aa).

A PTS1-type peroxisomal targeting signal motif is present at residues S278–L280.

It belongs to the enoyl-CoA hydratase/isomerase family.

The protein resides in the peroxisome. Its pathway is siderophore biosynthesis. Its function is as follows. Mevalonyl-coenzyme A hydratase; part of the gene cluster that mediates the biosynthesis of at least 11 siderophores, including beauverichelin A, dimerumic acid (DA), Na-dimethyl coprogen (NADC), eleutherazine B, ferricrocin (FC), fusarinine A, fusarinine C (FsC), metachelin A, mevalonolactone, rhodotorulic acid (RA) and tenellin. This cocktail of siderophores for iron metabolism is essential for virulence, and more specifically for the fungal virulence in penetrating through the host cuticle. Siderophore synthesis is also involved in conidial germination under iron-deficient conditions. For biosynthesis of fusarinine C, the transacylase SIDF transfers anhydromevalonyl to N(5)-hydroxyornithine. The required anhydromevalonyl-CoA moiety is derived from mevalonate by CoA ligation and dehydration catalyzed by SIDI and sidH respectively. SIDH is not essential for siderophore production, probably due to functional redundancy of this protein family, as there are 15 homologs of SIDH in B.bassiana. This is Mevalonyl-coenzyme A hydratase SIDH from Beauveria bassiana (strain ARSEF 2860) (White muscardine disease fungus).